The primary structure comprises 527 residues: Estrogen receptor beta (527 aa).

The modulating stretch occupies residues 1 to 145 (MDVKNSPSSL…SPSSKRDAHF (145 aa)). Phosphoserine; by MAPK is present on residues S84 and S102. NR C4-type zinc fingers lie at residues 146–166 (CAVC…CEGC) and 182–206 (CPAT…LRKC). Residues 146–211 (CAVCSDYASG…RLRKCYEVGM (66 aa)) constitute a DNA-binding region (nuclear receptor). The NR LBD domain occupies 261–495 (SPEQLVLTLL…DLLLEMLNAH (235 aa)).

It belongs to the nuclear hormone receptor family. NR3 subfamily. As to quaternary structure, binds DNA as a homodimer. Can form a heterodimer with ESR1. Interacts with NCOA1, NCOA3, NCOA5 and NCOA6 coactivators, leading to a strong increase of transcription of target genes. Interacts with UBE1C and AKAP13. Interacts with DNTTIP2. Interacts with CCDC62 in the presence of estradiol/E2; this interaction seems to enhance the transcription of target genes. Interacts with DNAAF4. Interacts with PRMT2. Interacts with CCAR2 (via N-terminus) in a ligand-independent manner. Interacts with RBM39, in the presence of estradiol (E2). Interacts with STUB1/CHIP. Post-translationally, phosphorylation at Ser-84 and Ser-102 recruits NCOA1. In terms of tissue distribution, present in granulosa cells of antral follicles in various stages of follicular growth.

The protein localises to the nucleus. In terms of biological role, nuclear hormone receptor. Binds estrogens with an affinity similar to that of ESR1ESR1/ER-alpha, and activates expression of reporter genes containing estrogen response elements (ERE) in an estrogen-dependent manner. The chain is Estrogen receptor beta (ESR2) from Bos taurus (Bovine).